A 183-amino-acid polypeptide reads, in one-letter code: Ras-related protein Rap-2a (183 aa).

10–17 (GSGGVGKS) serves as a coordination point for GTP. An Effector region motif is present at residues 32–40 (YDPTIEDFY). GTP contacts are provided by residues 57–61 (DTAGT) and 116–119 (NKVD). Residues cysteine 176 and cysteine 177 are each lipidated (S-palmitoyl cysteine). Cysteine 180 carries the cysteine methyl ester modification. The S-farnesyl cysteine moiety is linked to residue cysteine 180. Residues 181–183 (VIL) constitute a propeptide, removed in mature form.

It belongs to the small GTPase superfamily. Ras family. Interacts (GTP-bound form) with RUNDC3A. Interacts with PLCE1. Interacts with ARHGAP29, SGSM1, SGSM2 and SGSM3. Interacts (GTP-bound form preferentially) with TNIK (via the CNH domain); the interaction is direct and recruits RAP2A to the E3 ubiquitin ligase NEDD4. Interacts with MINK1. Interacts (GTP-bound form preferentially) with MAP4K4. Interacts with cytoskeletal actin. Interacts with RGS14; the interaction is GTP-dependent. Post-translationally, ubiquitinated; undergoes 'Lys-63' monoubiquitination and diubiquitination by NEDD4. Multiple lysine residues are probably modified. Ubiquitination requires TNIK, prevents interaction with effectors and inactivates RAP2A. Ubiquitination by the ECS(RAB40B) complex leads to RAP2A localization to lamellipodia plasma membrane, activation, and regulation of sorting at early endosomes for recycling to the lamellipodia plasma membrane. In terms of processing, palmitoylated. Palmitoylation is required for association with recycling endosome membranes and activation of TNIK.

It is found in the midbody. The protein localises to the cell projection. Its subcellular location is the lamellipodium membrane. The protein resides in the golgi apparatus. It localises to the recycling endosome membrane. It is found in the lysosome. It catalyses the reaction GTP + H2O = GDP + phosphate + H(+). Its activity is regulated as follows. Activated by the guanine nucleotide-exchange factors RAPGEF3 and RAPGEF4 in a cAMP-dependent manner. Nucleotide exchange is also specifically stimulated by RAPGEF5, RASGEF1A and RASGEF1B. Functionally, small GTP-binding protein which cycles between a GDP-bound inactive and a GTP-bound active form. In its active form interacts with and regulates several effectors including MAP4K4, MINK1 and TNIK. Part of a signaling complex composed of NEDD4, RAP2A and TNIK which regulates neuronal dendrite extension and arborization during development. More generally, it is part of several signaling cascades and may regulate cytoskeletal rearrangements, cell migration, cell adhesion and cell spreading. The chain is Ras-related protein Rap-2a (RAP2A) from Sus scrofa (Pig).